A 514-amino-acid polypeptide reads, in one-letter code: H/ACA ribonucleoprotein complex subunit DKC1 (514 aa).

N-acetylalanine is present on Ala2. The segment at 2-21 (ADAEVIILPKKHKKKKERKS) is nucleolar localization. Lys20 participates in a covalent cross-link: Glycyl lysine isopeptide (Lys-Gly) (interchain with G-Cter in SUMO2). Ser21 bears the Phosphoserine mark. Residues Lys39 and Lys43 each participate in a glycyl lysine isopeptide (Lys-Gly) (interchain with G-Cter in SUMO2) cross-link. Catalysis depends on Asp125, which acts as the Nucleophile. Residue Lys191 forms a Glycyl lysine isopeptide (Lys-Gly) (interchain with G-Cter in SUMO2) linkage. Residues 296–371 (HKRLVMKDSA…IVAKIKRVIM (76 aa)) enclose the PUA domain. Phosphoserine is present on Ser387. A Glycyl lysine isopeptide (Lys-Gly) (interchain with G-Cter in SUMO2) cross-link involves residue Lys394. Lys413 participates in a covalent cross-link: Glycyl lysine isopeptide (Lys-Gly) (interchain with G-Cter in SUMO1); alternate. A Glycyl lysine isopeptide (Lys-Gly) (interchain with G-Cter in SUMO2); alternate cross-link involves residue Lys413. Residues Lys424 and Lys433 each participate in a glycyl lysine isopeptide (Lys-Gly) (interchain with G-Cter in SUMO2) cross-link. The tract at residues 443 to 514 (KTAKRKRESE…KAKEVELVSE (72 aa)) is disordered. A nuclear and nucleolar localization region spans residues 446–514 (KRKRESESES…KAKEVELVSE (69 aa)). Residues Ser451, Ser453, and Ser455 each carry the phosphoserine modification. A Phosphothreonine modification is found at Thr458. A Glycyl lysine isopeptide (Lys-Gly) (interchain with G-Cter in SUMO2) cross-link involves residue Lys467. A compositionally biased stretch (basic residues) spans 468-480 (KEKKKSKKDKKAK). Phosphoserine is present on residues Ser485, Ser494, and Ser513.

Belongs to the pseudouridine synthase TruB family. Part of the H/ACA small nucleolar ribonucleoprotein (H/ACA snoRNP) complex, which contains NHP2/NOLA2, GAR1/NOLA1, NOP10/NOLA3, and DKC1/NOLA4, which is presumed to be the catalytic subunit. The complex contains a stable core formed by binding of one or two NOP10-DKC1 heterodimers to NHP2; GAR1 subsequently binds to this core via DKC1. The complex binds a box H/ACA small nucleolar RNA (snoRNA), which may target the specific site of modification within the RNA substrate. During assembly, the complex contains NAF1 instead of GAR1/NOLA1. The complex also interacts with TERC, which contains a 3'-terminal domain related to the box H/ACA snoRNAs. Specific interactions with snoRNAs or TERC are mediated by GAR1 and NHP2. Associates with NOLC1/NOPP140. H/ACA snoRNPs interact with the SMN complex, consisting of SMN1 or SMN2, GEMIN2/SIP1, DDX20/GEMIN3, and GEMIN4. This is mediated by interaction between GAR1 and SMN1 or SMN2. The SMN complex may be required for correct assembly of the H/ACA snoRNP complex. Component of the telomerase holoenzyme complex composed of one molecule of TERT, one molecule of WRAP53/TCAB1, two molecules of H/ACA ribonucleoprotein complex subunits DKC1, NOP10, NHP2 and GAR1, and a telomerase RNA template component (TERC). The telomerase holoenzyme complex is associated with TEP1, SMG6/EST1A and POT1. Interacts with SHQ1; this interaction may lead to the stabilization of DKC1, from the time of its synthesis until its association with NOP10, NHP2, and NAF1 at the nascent H/ACA RNA. Interacts with HMBOX1. Interacts with DHX36. As to expression, ubiquitously expressed.

Its subcellular location is the nucleus. It localises to the nucleolus. It is found in the cajal body. The protein resides in the cytoplasm. It carries out the reaction uridine in 5S rRNA = pseudouridine in 5S rRNA. In terms of biological role, catalytic subunit of H/ACA small nucleolar ribonucleoprotein (H/ACA snoRNP) complex, which catalyzes pseudouridylation of rRNA. This involves the isomerization of uridine such that the ribose is subsequently attached to C5, instead of the normal N1. Each rRNA can contain up to 100 pseudouridine ('psi') residues, which may serve to stabilize the conformation of rRNAs. Required for ribosome biogenesis and telomere maintenance. Also required for correct processing or intranuclear trafficking of TERC, the RNA component of the telomerase reverse transcriptase (TERT) holoenzyme. Functionally, promotes cell to cell and cell to substratum adhesion, increases the cell proliferation rate and leads to cytokeratin hyper-expression. This chain is H/ACA ribonucleoprotein complex subunit DKC1, found in Homo sapiens (Human).